Here is a 295-residue protein sequence, read N- to C-terminus: F-box only protein 8 (295 aa).

The region spanning 35–80 is the F-box domain; sequence TWVARYIPQDLLIEILTRLPPKSVMRFKCVSKFWSSLLSSRYFCNR.

This chain is F-box only protein 8 (FBX8), found in Arabidopsis thaliana (Mouse-ear cress).